A 335-amino-acid chain; its full sequence is CTD kinase subunit beta (335 aa).

2 Cyclin N-terminal domains span residues 26–151 (ILST…CFDF) and 158–241 (NYMV…LYMH). A disordered region spans residues 269-293 (KNSGRPQKPPQIDPHSSSLADEYRE).

It belongs to the cyclin family. As to quaternary structure, CTDK-I consists of three subunits, ctk1/lsk1, ctk2/lsc1 and ctk3 (also called alpha, beta and gamma). Interacts with ctk1/lsk1. This interaction is dependent on ctk1/lsk1 kinase activity.

The protein resides in the cytoplasm. Its subcellular location is the nucleus. Its function is as follows. Cyclin subunit of the CTDK-I complex, which hyperphosphorylates the C-terminal heptapeptide repeat domain (CTD) of the largest RNA polymerase II subunit. As part of the CTDK-I complex, involved in RNA polymerase II transcriptional elongation and pre-mRNA 3'-end processing. Together with ctk3, required for ctk1/lsk1 CTD kinase activation. Together with ctk1/lsk1, required for the regulation of cytokinesis by phosphorylating 'Ser-2' residues found in the heptad repeats of the CTD. The sequence is that of CTD kinase subunit beta (lsc1) from Schizosaccharomyces pombe (strain 972 / ATCC 24843) (Fission yeast).